We begin with the raw amino-acid sequence, 135 residues long: D-ribose pyranase (135 aa).

His20 acts as the Proton donor in catalysis. Residues Asp28, His102, and 124-126 (YSN) contribute to the substrate site.

Belongs to the RbsD / FucU family. RbsD subfamily. Homodecamer.

The protein localises to the cytoplasm. It catalyses the reaction beta-D-ribopyranose = beta-D-ribofuranose. It functions in the pathway carbohydrate metabolism; D-ribose degradation; D-ribose 5-phosphate from beta-D-ribopyranose: step 1/2. Catalyzes the interconversion of beta-pyran and beta-furan forms of D-ribose. This is D-ribose pyranase from Thermotoga petrophila (strain ATCC BAA-488 / DSM 13995 / JCM 10881 / RKU-1).